The following is a 417-amino-acid chain: C6 finger transcription factor traC (417 aa).

Residues 1–40 (MNFSEQFTGRSEPGRKANRTSNNNTNSTTNVATVTTDDSN) form a disordered region. Low complexity predominate over residues 19–37 (RTSNNNTNSTTNVATVTTD). Residues 44-73 (CDRCKGQKLRCIWENGSNTCRRCTRARAVC) constitute a DNA-binding region (zn(2)-C6 fungal-type). Disordered stretches follow at residues 75–94 (QPRPRPFGRPRCSTKSKHHV) and 104–128 (WVSSTTQQPQENDAEMPMATSDDHD). Positions 80–94 (PFGRPRCSTKSKHHV) are enriched in basic residues. Residues 104 to 114 (WVSSTTQQPQE) show a composition bias toward polar residues.

It localises to the nucleus. Its function is as follows. C6 finger transcription factor; part of the tra gene cluster that produces terrestric acid. The clavatol biosynthesis cluster cla and the terrestric acid cluster tra are both involved in the production of peniphenones and penilactones. In Penicillium crustosum (Blue mold fungus), this protein is C6 finger transcription factor traC.